The chain runs to 390 residues: MSLSERQREEINRAVAEYLQNNGYSEAFNMLLKEASLSENDIKPLGGILEKKWTTVLRLQRKVNDLEAKLLESQQEINHGAPTRDKRQAADWIPRPPETQKLIGHRLPVTRVIFHPLWTIMASCSEDATIKVWDYETGQLEKTLKGHTDAVNDIAIDAAGKQLVSCSTDLTIKLWDFGQSYDCLKSLKGHEHTVSSVTFLPTGDFVLSASRDHTIKQWDISTGYCVFTFRGHNDWVRMIRISHDGTLFASGSLDQTVSVWSLPRKQRNWYFEIMSMRWSVSKPEGNSTHILFSGSRDRSIKAWNISTGEVIFTLSAHENWVRGLAFHPKGKYLVSVADDKMMRIWELSAQRCMKAIEAHEHFVSTVAFHQTNPYVITGSVDMSCKVWECR.

Positions 7–39 (QREEINRAVAEYLQNNGYSEAFNMLLKEASLSE) constitute a LisH domain. A coiled-coil region spans residues 54–80 (TTVLRLQRKVNDLEAKLLESQQEINHG). WD repeat units lie at residues 104–145 (GHRL…KTLK), 146–185 (GHTDAVNDIAIDAAGKQLVSCSTDLTIKLWDFGQSYDCLK), 189–228 (GHEHTVSSVTFLPTGDFVLSASRDHTIKQWDISTGYCVFT), 231–270 (GHNDWVRMIRISHDGTLFASGSLDQTVSVWSLPRKQRNWY), 272–313 (EIMS…VIFT), 316–355 (AHENWVRGLAFHPKGKYLVSVADDKMMRIWELSAQRCMKA), and 358–390 (AHEHFVSTVAFHQTNPYVITGSVDMSCKVWECR).

The protein belongs to the WD repeat LIS1/nudF family.

It localises to the cytoplasm. It is found in the cytoskeleton. The protein localises to the microtubule organizing center. The protein resides in the centrosome. Functionally, positively regulates the activity of the minus-end directed microtubule motor protein dynein. May enhance dynein-mediated microtubule sliding by targeting dynein to the microtubule plus end. Required for several dynein- and microtubule-dependent processes. This Caenorhabditis briggsae protein is Lissencephaly-1 homolog.